Reading from the N-terminus, the 418-residue chain is Vasopressin V1a receptor (418 aa).

Positions 1–43 (MRLSAGPDAGPSGNSSPWWPLATGAGNTSREAEALGEGNGPPR) are disordered. The Extracellular segment spans residues 1-52 (MRLSAGPDAGPSGNSSPWWPLATGAGNTSREAEALGEGNGPPRDVRNEELAK). A glycan (N-linked (GlcNAc...) asparagine) is linked at N27. A helical transmembrane segment spans residues 53 to 76 (LEIAVLAVTFAVAVLGNSSVLLAL). Residues 77–88 (HRTPRKTSRMHL) are Cytoplasmic-facing. Residues 89–110 (FIRHLSLADLAVAFFQVLPQMC) traverse the membrane as a helical segment. Topologically, residues 111–125 (WDITYRFRGPDWLCR) are extracellular. A disulfide bridge connects residues C124 and C203. Residues 126 to 147 (VVKHLQVFGMFASAYMLVVMTA) traverse the membrane as a helical segment. At 148–168 (DRYIAVCHPLKTLQQPARRSR) the chain is on the cytoplasmic side. The helical transmembrane segment at 169–190 (LMIAAAWVLSFVLSTPQYFVFS) threads the bilayer. Topologically, residues 191–218 (MIEVNNVTKARDCWATFIQPWGSRAYVT) are extracellular. The N-linked (GlcNAc...) asparagine glycan is linked to N196. Residues 219–239 (WMTGGIFVAPVVILGTCYGFI) form a helical membrane-spanning segment. Topologically, residues 240–293 (CYNIWCNVRGKTASRQSKGAEQAGVAFQKGFLLAPCVSSVKSISRAKIRTVKMT) are cytoplasmic. Residues 294 to 313 (FVIVTAYIVCWAPFFIIQMW) form a helical membrane-spanning segment. At 314–331 (SVWDPMSVWTESENPTIT) the chain is on the extracellular side. Residues 332 to 351 (ITALLGSLNSCCNPWIYMFF) traverse the membrane as a helical segment. The Cytoplasmic portion of the chain corresponds to 352–418 (SGHLLQDCVQ…KSIKFIPVST (67 aa)). Residues C365 and C366 are each lipidated (S-palmitoyl cysteine). The tract at residues 377 to 410 (DTDSMSRRQTFYSNNRSPTNSTGMWKDSPKSSKS) is disordered. The span at 383–399 (RRQTFYSNNRSPTNSTG) shows a compositional bias: polar residues. S404 is subject to Phosphoserine.

It belongs to the G-protein coupled receptor 1 family. Vasopressin/oxytocin receptor subfamily.

It is found in the cell membrane. Receptor for arginine vasopressin. The activity of this receptor is mediated by G proteins which activate a phosphatidyl-inositol-calcium second messenger system. Has been involved in social behaviors, including affiliation and attachment. The sequence is that of Vasopressin V1a receptor (AVPR1A) from Homo sapiens (Human).